A 306-amino-acid chain; its full sequence is tRNA dimethylallyltransferase (306 aa).

12–19 (GPTAAGKT) is a binding site for ATP. 14 to 19 (TAAGKT) contributes to the substrate binding site. Interaction with substrate tRNA regions lie at residues 37–40 (DSAL), 161–165 (QRINR), and 242–247 (RCVGYR).

The protein belongs to the IPP transferase family. Monomer. Mg(2+) is required as a cofactor.

The enzyme catalyses adenosine(37) in tRNA + dimethylallyl diphosphate = N(6)-dimethylallyladenosine(37) in tRNA + diphosphate. In terms of biological role, catalyzes the transfer of a dimethylallyl group onto the adenine at position 37 in tRNAs that read codons beginning with uridine, leading to the formation of N6-(dimethylallyl)adenosine (i(6)A). The sequence is that of tRNA dimethylallyltransferase from Pseudoalteromonas translucida (strain TAC 125).